A 163-amino-acid polypeptide reads, in one-letter code: Acetolactate synthase small subunit (163 aa).

In terms of domain architecture, ACT spans Ile4–Gln79.

The protein belongs to the acetolactate synthase small subunit family. Dimer of large and small chains.

The catalysed reaction is 2 pyruvate + H(+) = (2S)-2-acetolactate + CO2. Its pathway is amino-acid biosynthesis; L-isoleucine biosynthesis; L-isoleucine from 2-oxobutanoate: step 1/4. It functions in the pathway amino-acid biosynthesis; L-valine biosynthesis; L-valine from pyruvate: step 1/4. The polypeptide is Acetolactate synthase small subunit (ilvH) (Haemophilus influenzae (strain ATCC 51907 / DSM 11121 / KW20 / Rd)).